The primary structure comprises 293 residues: ATP synthase subunit a (293 aa).

The next 8 helical transmembrane spans lie at 39–59 (QVFGIFVVFIVLLTLFLVYWI), 73–93 (FVLLMQMLFVWAQDTTADLIG), 102–122 (YFLMLLLYLVSSNLIGLLGGI), 128–148 (SLTFTFSLGLATFLGIVIMGI), 172–192 (TLIPNPLSFLGEFAPLFSISL), 198–218 (ILGGTLILALFYNFWFFAFST), 224–244 (LALSLGAIFAGILTPALHVYF), and 245–265 (DVVVGTLQGYVFVMLTYNYWA).

The protein belongs to the ATPase A chain family. As to quaternary structure, F-type ATPases have 2 components, CF(1) - the catalytic core - and CF(0) - the membrane proton channel. CF(1) has five subunits: alpha(3), beta(3), gamma(1), delta(1), epsilon(1). CF(0) has three main subunits: a(1), b(2) and c(9-12). The alpha and beta chains form an alternating ring which encloses part of the gamma chain. CF(1) is attached to CF(0) by a central stalk formed by the gamma and epsilon chains, while a peripheral stalk is formed by the delta and b chains.

Its subcellular location is the cell membrane. In terms of biological role, key component of the proton channel; it plays a direct role in the translocation of protons across the membrane. The polypeptide is ATP synthase subunit a (Mycoplasma pneumoniae (strain ATCC 29342 / M129 / Subtype 1) (Mycoplasmoides pneumoniae)).